A 204-amino-acid polypeptide reads, in one-letter code: Large ribosomal subunit protein uL4 (204 aa).

The disordered stretch occupies residues 49 to 72 (QKNRAAVSGGGKKPWRQKGTGRAR).

The protein belongs to the universal ribosomal protein uL4 family. Part of the 50S ribosomal subunit.

In terms of biological role, one of the primary rRNA binding proteins, this protein initially binds near the 5'-end of the 23S rRNA. It is important during the early stages of 50S assembly. It makes multiple contacts with different domains of the 23S rRNA in the assembled 50S subunit and ribosome. Forms part of the polypeptide exit tunnel. The polypeptide is Large ribosomal subunit protein uL4 (Saccharophagus degradans (strain 2-40 / ATCC 43961 / DSM 17024)).